We begin with the raw amino-acid sequence, 293 residues long: MAELAQFAKMNGLGNAIIVADMRGRADRVRPEAAQRLASDPATHFDQIMAIHDPRLEGTENYIEIINSDGSVAQACGNGMRCVVQRLAAETGRPSFTFETIAGVLSAEEHANGLISVDMGKPRFGWQDIPLAEEFHDTRKIELQVGPIDKPVLHSPSVASMGNPHAIFWVEDDPYSYDLERFGPMLENHPIFPERANITIARVDSPEELTMRTWERGAGLTLACGSAACAAAVSAARTGRTGRGVKVNLPGGSLEILWRDDDHVIMTGPAEWEFSGRFDPATGAWERETEGAA.

The substrate site is built by asparagine 15, glutamine 47, and asparagine 67. Cysteine 76 acts as the Proton donor in catalysis. Residues 77 to 78 (GN), asparagine 163, asparagine 197, and 215 to 216 (ER) each bind substrate. Cysteine 224 serves as the catalytic Proton acceptor. 225–226 (GS) is a binding site for substrate.

Belongs to the diaminopimelate epimerase family. In terms of assembly, homodimer.

Its subcellular location is the cytoplasm. It catalyses the reaction (2S,6S)-2,6-diaminopimelate = meso-2,6-diaminopimelate. The protein operates within amino-acid biosynthesis; L-lysine biosynthesis via DAP pathway; DL-2,6-diaminopimelate from LL-2,6-diaminopimelate: step 1/1. Catalyzes the stereoinversion of LL-2,6-diaminopimelate (L,L-DAP) to meso-diaminopimelate (meso-DAP), a precursor of L-lysine and an essential component of the bacterial peptidoglycan. This Chelativorans sp. (strain BNC1) protein is Diaminopimelate epimerase.